The chain runs to 135 residues: Putative pre-16S rRNA nuclease (135 aa).

This sequence belongs to the YqgF nuclease family.

The protein resides in the cytoplasm. Its function is as follows. Could be a nuclease involved in processing of the 5'-end of pre-16S rRNA. The chain is Putative pre-16S rRNA nuclease from Buchnera aphidicola subsp. Acyrthosiphon pisum (strain 5A).